Consider the following 604-residue polypeptide: Baculoviral IAP repeat-containing protein 3 (604 aa).

3 BIR repeats span residues 29–96 (ELYR…CRFV), 169–235 (ENAR…CPFI), and 255–322 (HAAR…CEYL). The Zn(2+) site is built by C292, C295, H312, and C319. One can recognise a CARD domain in the interval 439-529 (KESNDLLLIR…VLYEHLFVQQ (91 aa)). The RING-type zinc-finger motif lies at 557 to 592 (CKVCMDKEVSIVFIPCGHLVVCKDCAPSLRKCPICR).

It belongs to the IAP family. As to quaternary structure, interacts with PRSS25; interaction inhibits apoptotic suppressor activity. The BIR motifs region interacts with TNF receptor associated factors 1 and 2 (TRAF1 and TRAF2) to form a heteromeric complex, which is then recruited to the tumor necrosis factor receptor 2 (TNFR2). Interaction with TRAF2 is required for ubiquitination of IKBKE, degradation of NFKBIA and activation of NF-kappa-B. Interacts with RIP1, RIP2, RIP3, RIP4 and USP19. Post-translationally, auto-ubiquitinated and degraded by the proteasome in apoptotic cells. As to expression, highly expressed in fetal lung, and kidney. In the adult, expression is mainly seen in lymphoid tissues, including spleen, thymus and peripheral blood lymphocytes.

The protein localises to the cytoplasm. The protein resides in the nucleus. It carries out the reaction S-ubiquitinyl-[E2 ubiquitin-conjugating enzyme]-L-cysteine + [acceptor protein]-L-lysine = [E2 ubiquitin-conjugating enzyme]-L-cysteine + N(6)-ubiquitinyl-[acceptor protein]-L-lysine.. Its activity is regulated as follows. USP19 regulates the stability of BIRC3/c-IAP2 by preventing its ubiquitination. Multi-functional protein which regulates not only caspases and apoptosis, but also modulates inflammatory signaling and immunity, mitogenic kinase signaling and cell proliferation, as well as cell invasion and metastasis. Acts as an E3 ubiquitin-protein ligase regulating NF-kappa-B signaling and regulates both canonical and non-canonical NF-kappa-B signaling by acting in opposite directions: acts as a positive regulator of the canonical pathway and suppresses constitutive activation of non-canonical NF-kappa-B signaling. The target proteins for its E3 ubiquitin-protein ligase activity include: RIPK1, RIPK2, RIPK3, RIPK4, CASP3, CASP7, CASP8, IKBKE, TRAF1, and BCL10. Acts as an important regulator of innate immune signaling via regulation of Toll-like receptors (TLRs), Nodlike receptors (NLRs) and RIG-I like receptors (RLRs), collectively referred to as pattern recognition receptors (PRRs). Protects cells from spontaneous formation of the ripoptosome, a large multi-protein complex that has the capability to kill cancer cells in a caspase-dependent and caspase-independent manner. Suppresses ripoptosome formation by ubiquitinating RIPK1 and CASP8. This chain is Baculoviral IAP repeat-containing protein 3 (BIRC3), found in Homo sapiens (Human).